Consider the following 431-residue polypeptide: 5-methylthioadenosine/S-adenosylhomocysteine deaminase (431 aa).

Zn(2+) contacts are provided by His-66 and His-68. 3 residues coordinate substrate: Glu-95, Arg-147, and His-185. His-212 provides a ligand contact to Zn(2+). Substrate-binding residues include Glu-215 and Asp-300. Asp-300 contacts Zn(2+).

The protein belongs to the metallo-dependent hydrolases superfamily. MTA/SAH deaminase family. Zn(2+) is required as a cofactor.

The enzyme catalyses S-adenosyl-L-homocysteine + H2O + H(+) = S-inosyl-L-homocysteine + NH4(+). The catalysed reaction is S-methyl-5'-thioadenosine + H2O + H(+) = S-methyl-5'-thioinosine + NH4(+). Catalyzes the deamination of 5-methylthioadenosine and S-adenosyl-L-homocysteine into 5-methylthioinosine and S-inosyl-L-homocysteine, respectively. Is also able to deaminate adenosine. In Desulfitobacterium hafniense (strain DSM 10664 / DCB-2), this protein is 5-methylthioadenosine/S-adenosylhomocysteine deaminase.